A 509-amino-acid chain; its full sequence is MEEIQRYLQPDRSQQHNFLYPLIFQEYIYALAHDHGLNRNRSILLENPGYDNKFSFLIVKRLITRMYQQNHFLISTNDSNKNSFLGCNKSLYSQMISEGFAFIAEIPFSLRLMSSLSSFEGKNIFKSHNLRSIHSTFPFLEDNFSHLNYVLDILIPYPVHLEILVQTLRYWVKDASSLHLLRFFLHEYWNLNSLITSKKPGYSFSKKNQRFFFFLYNSYVYECESTFVFLRNQSSHLRSTSFGALLERIYFYGKIERLVEVFAKDFQVTLWLFKDPFMHYVRYQGKSIMASKGTFLLMNKWKFYLVNFWQCHFSLCFHTGRIHINQLSNHSRDFMGYLSSVRLNPSMVRSQMLENSFLINNAIKKFDILVPIIPLIGSLAKENFCTVLGHPISKPVWSDLSDSDIIDRFGRICRNLFHYYSGSSKKKTLYRIKYILRLSCARTLARKHKSTVRTFLKRSGSELLEEFLTSEEQVLSLTFPRASSSLWGVYRSRIWYLDIFCINDLANYQ.

It belongs to the intron maturase 2 family. MatK subfamily.

It localises to the plastid. The protein localises to the chloroplast. In terms of biological role, usually encoded in the trnK tRNA gene intron. Probably assists in splicing its own and other chloroplast group II introns. This chain is Maturase K, found in Anthocercis angustifolia (Narrow-leaf ray-flower).